We begin with the raw amino-acid sequence, 183 residues long: ATP synthase subunit delta, chloroplastic (183 aa).

Belongs to the ATPase delta chain family. In terms of assembly, F-type ATPases have 2 components, F(1) - the catalytic core - and F(0) - the membrane proton channel. F(1) has five subunits: alpha(3), beta(3), gamma(1), delta(1), epsilon(1). CF(0) has four main subunits: a(1), b(1), b'(1) and c(10-14). The alpha and beta chains form an alternating ring which encloses part of the gamma chain. F(1) is attached to F(0) by a central stalk formed by the gamma and epsilon chains, while a peripheral stalk is formed by the delta, b and b' chains.

Its subcellular location is the plastid. It is found in the chloroplast thylakoid membrane. F(1)F(0) ATP synthase produces ATP from ADP in the presence of a proton or sodium gradient. F-type ATPases consist of two structural domains, F(1) containing the extramembraneous catalytic core and F(0) containing the membrane proton channel, linked together by a central stalk and a peripheral stalk. During catalysis, ATP synthesis in the catalytic domain of F(1) is coupled via a rotary mechanism of the central stalk subunits to proton translocation. In terms of biological role, this protein is part of the stalk that links CF(0) to CF(1). It either transmits conformational changes from CF(0) to CF(1) or is implicated in proton conduction. In Cyanidium caldarium (Red alga), this protein is ATP synthase subunit delta, chloroplastic.